The primary structure comprises 735 residues: Catalase-peroxidase (735 aa).

The interval 1–25 is disordered; it reads MSDSKCPVTGKSSRQVAGGGTSNRD. The segment at residues 95 to 223 is a cross-link (tryptophyl-tyrosyl-methioninium (Trp-Tyr) (with M-249)); it reads WHSAGTYRMG…LAAVQMGLIY (129 aa). His96 (proton acceptor) is an active-site residue. Positions 223-249 form a cross-link, tryptophyl-tyrosyl-methioninium (Tyr-Met) (with W-95); that stretch reads YINPEGPDGNPDPVASGRDVRETFARM. Heme b is bound at residue His264.

This sequence belongs to the peroxidase family. Peroxidase/catalase subfamily. As to quaternary structure, homodimer or homotetramer. Requires heme b as cofactor. Formation of the three residue Trp-Tyr-Met cross-link is important for the catalase, but not the peroxidase activity of the enzyme.

The catalysed reaction is H2O2 + AH2 = A + 2 H2O. The enzyme catalyses 2 H2O2 = O2 + 2 H2O. Its function is as follows. Bifunctional enzyme with both catalase and broad-spectrum peroxidase activity. This chain is Catalase-peroxidase, found in Trichlorobacter lovleyi (strain ATCC BAA-1151 / DSM 17278 / SZ) (Geobacter lovleyi).